The sequence spans 505 residues: Cytochrome P450 9b2 (505 aa).

Position 449 (Cys449) interacts with heme.

Belongs to the cytochrome P450 family. Requires heme as cofactor.

The protein resides in the endoplasmic reticulum membrane. Its subcellular location is the microsome membrane. Its function is as follows. May be involved in the metabolism of insect hormones and in the breakdown of synthetic insecticides. The polypeptide is Cytochrome P450 9b2 (Cyp9b2) (Drosophila melanogaster (Fruit fly)).